The primary structure comprises 344 residues: Acetylpolyamine amidohydrolase 2 (344 aa).

The active-site Proton donor/acceptor is the His159. Zn(2+) contacts are provided by Asp195, His197, and Asp284.

The protein belongs to the histone deacetylase family. As to quaternary structure, homodimer. Zn(2+) is required as a cofactor.

It catalyses the reaction N-acetylputrescine + H2O = putrescine + acetate. The enzyme catalyses N-acetylcadaverine + H2O = cadaverine + acetate. It participates in amine and polyamine metabolism. Functionally, catalyzes the deacetylation of acetylated polyamines such as N-acetylputrescine and N-acetylcadaverine. Plays an important role in the metabolism of acetylated polyamines in P.aeruginosa. Is involved in the degradation pathways of N-acetylputrescine and N-acetylcadaverine, that allow P.aeruginosa to utilize these acetylpolyamines as a carbon source under glucose starvation. Shows nearly no activity against N(1)-acetylspermine and N(1)-acetylspermidine. Can also hydrolyze artificial trifluoroacetylated lysine-derivative, and to a lesser extent, acetylated lysine-derivative. The protein is Acetylpolyamine amidohydrolase 2 of Pseudomonas aeruginosa (strain ATCC 15692 / DSM 22644 / CIP 104116 / JCM 14847 / LMG 12228 / 1C / PRS 101 / PAO1).